A 247-amino-acid chain; its full sequence is Malonyl-[acyl-carrier protein] O-methyltransferase (247 aa).

The protein belongs to the methyltransferase superfamily.

It catalyses the reaction malonyl-[ACP] + S-adenosyl-L-methionine = malonyl-[ACP] methyl ester + S-adenosyl-L-homocysteine. Its pathway is cofactor biosynthesis; biotin biosynthesis. Its function is as follows. Converts the free carboxyl group of a malonyl-thioester to its methyl ester by transfer of a methyl group from S-adenosyl-L-methionine (SAM). It allows to synthesize pimeloyl-ACP via the fatty acid synthetic pathway. In Buchnera aphidicola subsp. Baizongia pistaciae (strain Bp), this protein is Malonyl-[acyl-carrier protein] O-methyltransferase.